The sequence spans 182 residues: Protein GrpE (182 aa).

The disordered stretch occupies residues 1 to 35 (MTQENQTPPPEQENLAADPAVETTAETPAVKTPEQ).

The protein belongs to the GrpE family. As to quaternary structure, homodimer.

It localises to the cytoplasm. In terms of biological role, participates actively in the response to hyperosmotic and heat shock by preventing the aggregation of stress-denatured proteins, in association with DnaK and GrpE. It is the nucleotide exchange factor for DnaK and may function as a thermosensor. Unfolded proteins bind initially to DnaJ; upon interaction with the DnaJ-bound protein, DnaK hydrolyzes its bound ATP, resulting in the formation of a stable complex. GrpE releases ADP from DnaK; ATP binding to DnaK triggers the release of the substrate protein, thus completing the reaction cycle. Several rounds of ATP-dependent interactions between DnaJ, DnaK and GrpE are required for fully efficient folding. This Polynucleobacter necessarius subsp. necessarius (strain STIR1) protein is Protein GrpE.